Consider the following 519-residue polypeptide: Histidine ammonia-lyase (519 aa).

The 5-imidazolinone (Ala-Gly) cross-link spans 146–148; the sequence is ASG. A 2,3-didehydroalanine (Ser) modification is found at Ser-147.

It belongs to the PAL/histidase family. In terms of processing, contains an active site 4-methylidene-imidazol-5-one (MIO), which is formed autocatalytically by cyclization and dehydration of residues Ala-Ser-Gly.

The protein localises to the cytoplasm. The catalysed reaction is L-histidine = trans-urocanate + NH4(+). The protein operates within amino-acid degradation; L-histidine degradation into L-glutamate; N-formimidoyl-L-glutamate from L-histidine: step 1/3. This chain is Histidine ammonia-lyase, found in Psychrobacter sp. (strain PRwf-1).